We begin with the raw amino-acid sequence, 1079 residues long: Capping protein inhibiting regulator of actin dynamics (1079 aa).

Over residues 1 to 11 the composition is skewed to basic and acidic residues; it reads MSQENVSDKVR. Disordered stretches follow at residues 1–293, 308–327, 341–383, 420–453, 493–522, 606–639, and 658–1054; these read MSQE…EEER, ERKREQEERRRKEEEEAEKR, EHRI…EWKR, PVTPATGQQGETTAETWEGAKASSPGGPDSPTLS, EGKKAMGTPPSKSKTSPDRKSGKTKSVFES, IFGQEEGVKTESAFTETSPVQKELPSLGTKVQSR, and PSFL…TTQV. Residues 36 to 45 show a composition bias toward acidic residues; sequence DEGSSDEEEV. Residues 64 to 76 show a composition bias toward basic and acidic residues; it reads SAKEKSVSHDTVQ. The span at 115–134 shows a compositional bias: basic residues; sequence AKHKLSVKPKNQRVSRKHRR. A compositionally biased stretch (acidic residues) spans 140–158; sequence HEDDFSEIQEEFEKDEEVF. Residues 159-293 show a composition bias toward basic and acidic residues; that stretch reads DSSREDYGII…EERKRAEEER (135 aa). Polar residues predominate over residues 420-434; sequence PVTPATGQQGETTAE. Residues 670–682 are compositionally biased toward polar residues; it reads PKSQRSESGSPIQ. The segment covering 684–695 has biased composition (acidic residues); that stretch reads ESEDSDTKDEDG. Residues 756–781 show a composition bias toward polar residues; that stretch reads DNSTLSEKSSPISPQQENIEFQTTVA. 2 stretches are compositionally biased toward basic and acidic residues: residues 896-930 and 944-983; these read WREKTDRRTELIKKEKPSLQARHSLDSSRSQDKET and GFREQQQNREERRNQREAKLAEKQARDRESAGSSPTEDKG. Residues 984–993 show a composition bias toward polar residues; that stretch reads NGSSSIISKH. Over residues 994–1016 the composition is skewed to basic and acidic residues; that stretch reads QTADENKRPDTLLARFERRDNLK. The span at 1020–1033 shows a compositional bias: polar residues; it reads TLPSSVTVEITDST.

Directly interacts with actin-capping proteins; this interaction decreases the binding of capping proteins to actin.

The protein localises to the cytoplasm. It localises to the cytosol. In terms of biological role, involved in epithelial cell integrity by acting on the maintenance of the actin cytoskeleton. Positively regulates the actin polymerization, by inhibiting the interaction of actin-capping proteins with actin. This Danio rerio (Zebrafish) protein is Capping protein inhibiting regulator of actin dynamics (crad).